A 309-amino-acid chain; its full sequence is Mitochondrial import receptor subunit TOM34 (309 aa).

TPR repeat units lie at residues 9-42 (VEEL…LQAQ), 51-84 (SVLY…VPFS), and 86-118 (KPLL…DDSV). The residue at position 160 (Ser-160) is a Phosphoserine. Residues 161–189 (LPSENHKEMAKSKSKETTATKNRVPSAGD) are disordered. A compositionally biased stretch (basic and acidic residues) spans 164 to 178 (ENHKEMAKSKSKETT). Ser-186 bears the Phosphoserine mark. TPR repeat units follow at residues 193 to 226 (AKVL…SNLE), 227 to 260 (SATY…DGKN), and 262 to 294 (KAFY…EPRN). Residue Lys-197 forms a Glycyl lysine isopeptide (Lys-Gly) (interchain with G-Cter in SUMO2) linkage.

It belongs to the Tom34 family. As to quaternary structure, interacts with HSP90A, VCP, ATP6V1D, KIAA0665, AMPK, and DMAP1 through its TPR repeat.

The protein resides in the cytoplasm. Its subcellular location is the mitochondrion outer membrane. Functionally, plays a role in the import of cytosolically synthesized preproteins into mitochondria. Binds the mature portion of precursor proteins. Interacts with cellular components, and possesses weak ATPase activity. May be a chaperone-like protein that helps to keep newly synthesized precursors in an unfolded import compatible state. This is Mitochondrial import receptor subunit TOM34 (TOMM34) from Pongo abelii (Sumatran orangutan).